The following is a 3508-amino-acid chain: MNMVKRIMGRPRQEECSPQDNALGLMHLRRLFTELCHPPRHMTQKEQEEKLYMMLPVFNRVFGNAPPNTMTEKFSDLLQFTTQVSRLMVTEIRRRASNKSTEAASRAIVQFLEINQSEEASRGWMLLTTINLLASSGQKTVDCMTTMSVPSTLVKCLYLFFDLPHVPEAGGGAQNELPLAERRGLLQKAFVQILVKLCSFVSPAEELAQKDDLQLLFSAITSWCPPYNLPWRKSAGEVLMTISRHGLSVNVVKYIHEKECLSTCVQNMQQSDDLSPLEIVEMFAGLSCFLKDSSDVSQTLLDDFRIWQGYNFLCDLLLRLEQGKEAECRDALKDLVSLVTSLTTYGVSELKPAGVTTGAPFLLPGFAVPQPAGKGHSVRNIQAFAVLQNAFLKAKTNFLAQIILDAITNIYMADNANYFILESQHTLSQFAEKISKLPEVQNKYFEMLEFVVFSLNYIPCKELISVSILLKSSSSYHCSIIAMKTLLKFTRHDYIFKDVFREVGLLEVMVNLLHKYAALLKDPAQALNEQGDSRNNSSVEDQKHLALLVMEALTVLLQGSNTNAGIFREFGGARCAHNIVKYPQCRQHALMTIQQLVLSPNGEDDMGTLLGLMHSAPPTELQLKTDILRALLSVLRESHRSRTVFRKVGGFVYITSLLVAMERSLSSPPKNGWEKVSQSQVLELLHTVFCTLTAALRYEPANSHFFKTEIQYEKLADAVRFLGCFSDLRKISAVNVFPSNTQPFQRLLEEGAVSVDSVSPTLRHCSKLFIYLYKVATDSFDSHAEQIPPCLTSESSLPSPWGTPALSRKRHAFHCVSTPPVYPAKNVTDLKLQVTSSPLQSSDAVIIHPGAMLAMLDLLASVGSVTQPEHALDLQLAVANILQSLVHTERNQQVMCEAGLHARLLQRCGAALADEDHSLHPPLQRMFERLASQALEPMVLREFLRLASPLNCGAWDKKLLKQYRVHKPSSLSFEPEMRSSVITSLEGLGSDNVFSSHEDNHYRISKSLVKSAEGSTVPLTRVKCLVSMTTPHDIRLHGSSVTPAFVEFDTSLEGFGCLFLPSLAPHNAPTNNTVTTGLTDGAVVSGMGSGERFFPPPSGLSYSCWFCIEHFSSPPNNHPVRLLTVVRRANSSEQHYVCLAIVLSAKDRSLIVSTKEELLQNYVDDFSEESSFYEILPCCARFRCGELVVEGQWHHLALLMSRGMLKNSTAALYLDGQLVSTVKLHYVHSTPGGSGSANPPVLSTVYAYVGTPPAQRQIASLVWRLGPTHFLEEVLPPSSVTTIYELGPNYVGSFQAVCVPCKDAKSEGVTPSPVSLVAEEKVSFGLYALSVSSLTVARIRKVYNKLDSKAIAKQLGISSHENATPVKLVHNAAGHLNGPARTIGAALIGYLGVRTFVPKPVATTLQYIGGAAAILGLVAMASDVEGLYAAVKALVCVVKSNPLASKEMERIKGYQLLAMLLKKKRSLLNSHILHLTFSLVGTVDSGHETSIIPNSTAFQDLLCDFEVWLHAPYELHLSLFEHFIELLTESSEASKNAKLMREFQLIPKLLLTLRDMSLSQPTIAAISNVLSFLLQGFPNSNDLLRFGQFISSTLPTFAVCEKFVVMEINNEEKPDPGAEEEFGGLVSANLILLRNRLLDILLKLVYTSKEKTNINLQACEELVRTLGFDWIMMFMEEHLHPTTVTAAMRILVVLLSNQSILIKFKEGLSGGGWLEQTDSVLTNKIGTVLGFNVGRSAGGRSTVREINRDACHFPGFLVLQSFLPKHTNVPALYFLLMALFLQQPVSELPENLQVSVPVTSSRCKQGCQFDLDSIWTFIFGVPASSGTVVSSIHNVCTESAFLLLGMLRSMLNSPWQSEEEGSWLREYPVTLMQFFRYLYHNVPDLASMWLSPDFLCALAATVFPFNIRPYSEMVTDLDDEVGSPAEEFKAFAADTGMNRSQSEYCNVGTKTYLTNHPAKKFVFDFMRVLIIDNLCLTPASKQTPLIDLLLEASPERSTRTQQKEFQTHVLDSVMDHLLAADVLLGEDASLPITSGGSYQVLVNNVFYFTQRVVDKLWQGMFNKESKLLIDFIIQLIAQSKRRSQGLSLDAVYHCLNRTILYQFSRAHKTVPQQVALLDSLRVLTVNRNLILGPGNHDQEFISCLAHCLINLHAGSVEGFGLEAEARMTTWHIMIPSDIEPDGGYSQDISEGRQLLIKAVNRVWTELIHSKKQVLEELFKVSLPVNDRGHVDIALARPLIEEAGLKCWQNHLAHEKKCISRGEALVPTTQSKLSRVSSGFGLSKLTGSRRNRKESGLHKHSPSPQEISQWMFTHIAVVRDLVDTQYKEYQERQQNALKYVTEEWCQIECELLRERGLWGPPIGSHLDKWMLEMTEGPCRMRKKMVRNDMFYNHYPYVPETEQEASVGKPARYRRAISYDSKEYYLRLASGNPAIVQDAIVESSEGEATQQEPEHGEDTIAKVKGLVKPPLKRSRSAPDGGDEETQEQLQDQIAESGSIEEEEKTDNATLLRLLEEGEKIQHMYRCARVQGLDTSEGLLLFGKEHFYVIDGFTMTATREIRDIETLPPNMHEPIIPRGARQGPSQLKRTCSIFAYEDIKEVHKRRYLLQPIAVEVFSGDGRNYLLAFQKGIRNKVYQRFLAVVPSLTDSSESVSGQRPNTSVEQGSGLLSTLVGEKSVTQRWERGEISNFQYLMHLNTLAGRSYNDLMQYPVFPWILSDYDSEEVDLTNPKTFRNLAKPMGAQTDERLAQYKKRYKDWEDPNGETPAYHYGTHYSSAMIVASYLVRMEPFTQIFLRLQGGHFDLADRMFHSVREAWYSASKHNMADVKELIPEFFYLPEFLFNSNNFDLGCKQNGTKLGDVILPPWAKGDPREFIRVHREALECDYVSAHLHEWIDLIFGYKQQGPAAVEAVNVFHHLFYEGQVDIYNINDPLKETATIGFINNFGQIPKQLFKKPHPPKRVRSRLNGDNIGISVPPGATSDKIFFHHLDNLRPSLTPVKELKEPVGQIVCTDKGILAVEQNKVLIPPAWNKTFAWGYADLSCRLGTYESDKAVTVYECLSEWGQILCAVCPNPKLVITGGTSTVVCVWEMGTSKEKAKPLTLKQALLGHTDTVTCATASLAYHIIVSGSRDRTCIIWDLNKLSFLTQLRGHRAPVSALCINELTGDIVSCAGTYIHVWSINGNPIVSVNTFTGRSQQIVCCCMSEMNEWDTQNVIVTGHSDGVVRFWRMEFLQVPETPAPEPVEDLEMQEGCPEAQIGQQAQDDDSSDSETEEPSVSQDPKDTSSQPSSTSHRPRAASCRATATWCTDSGSDDSRRWSDQLSLDEKDGFIFVNYSEGQTRAHLQGPLAHPHPNPIEARSYSRLKPGYRWERQLVFRSKLTMHTAFDRKDNTHPAEVTALGVSKDHSRILVGDSRGRVFSWSVSDQPGRSAADHWVKDEGGDSCSGCSVRFSLTERRHHCRNCGQLFCQKCSRFQSEIKRLKISSPVRVCQNCYYSLQHERGAEDGPRNC.

Serine 1942 and serine 2277 each carry phosphoserine. Disordered regions lie at residues 2279–2303 and 2441–2504; these read FGLSKLTGSRRNRKESGLHKHSPSP and SSEG…EKTD. The segment at 2284-2963 is sufficient for translocalization to p62 bodies/ALIS; that stretch reads LTGSRRNRKE…PHPPKRVRSR (680 aa). Positions 2450-2459 are enriched in basic and acidic residues; sequence EPEHGEDTIA. Serine 2474 is subject to Phosphoserine. One can recognise a BEACH-type PH domain in the interval 2513–2638; sequence EEGEKIQHMY…IRNKVYQRFL (126 aa). Positions 2568 to 3508 are interaction with SQSTM1; the sequence is MHEPIIPRGA…RGAEDGPRNC (941 aa). Positions 2665 to 2958 constitute a BEACH domain; sequence GLLSTLVGEK…QLFKKPHPPK (294 aa). Residues 2963 to 3508 are interaction with ATG5; it reads RLNGDNIGIS…RGAEDGPRNC (546 aa). WD repeat units follow at residues 3059–3097, 3107–3146, 3149–3188, and 3192–3236; these read SEWGQILCAVCPNPKLVITGGTSTVVCVWEMGTSKEKAK, GHTDTVTCATASLAYHIIVSGSRDRTCIIWDLNKLSFLTQ, GHRAPVSALCINELTGDIVSCAGTYIHVWSINGNPIVSVN, and GRSQ…VPET. The interval 3254–3317 is disordered; that stretch reads AQIGQQAQDD…SGSDDSRRWS (64 aa). Residues 3261–3272 show a composition bias toward acidic residues; the sequence is QDDDSSDSETEE. Serine 3317 and serine 3321 each carry phosphoserine. An LIR motif is present at residues 3326–3331; that stretch reads DGFIFV. The WD 5 repeat unit spans residues 3390-3429; that stretch reads THPAEVTALGVSKDHSRILVGDSRGRVFSWSVSDQPGRSA. Residues 3436–3496 form an FYVE-type zinc finger; that stretch reads DEGGDSCSGC…VCQNCYYSLQ (61 aa). Zn(2+) is bound by residues cysteine 3442, cysteine 3445, cysteine 3458, cysteine 3461, cysteine 3466, cysteine 3469, cysteine 3488, and cysteine 3491.

In terms of assembly, directly interacts with ATG5 and associates with the ATG12-ATG5-ATG16L complex. Interacts with p62/SQSTM1. Directly interacts with GABARAP, GABARAPL1 and GABARAPL2; the interaction with GABARAP is required for WDFY3 recruitment to MAP1LC3B-positive p62/SQSTM1 bodies. Weakly interacts with MAP1LC3C; this interaction is direct. Does not interact with MAP1LC3A, nor MAP1LC3B. Interacts with TRAF6. Widely expressed, with high levels in the brain (at protein level). In the brain, expressed by both neuronal and non-neuronal cells. Expressed in bones, in the periosteum, cartilage, growth plate, trabeculae of the primary spongiosa, and scattered hematopoietic cells within the medullary cavity. Tends to be expressed at lower levels in the hypertrophic zone compared to trabeculae. Expressed in osteoblasts, osteoclasts and bone-marrow derived macrophages.

The protein resides in the nucleus. Its subcellular location is the cytoplasm. The protein localises to the cytosol. It localises to the PML body. It is found in the membrane. The protein resides in the perikaryon. Its subcellular location is the cell projection. The protein localises to the axon. In terms of biological role, required for selective macroautophagy (aggrephagy). Acts as an adapter protein by linking specific proteins destined for degradation to the core autophagic machinery members, such as the ATG5-ATG12-ATG16L E3-like ligase, SQSTM1 and LC3. Involved in the formation and autophagic degradation of cytoplasmic ubiquitin-containing inclusions (p62 bodies, ALIS/aggresome-like induced structures). Important for normal brain development. Essential for the formation of axonal tracts throughout the brain and spinal cord, including the formation of the major forebrain commissures. Involved in the ability of neural cells to respond to guidance cues. Required for cortical neurons to respond to the trophic effects of netrin-1/NTN1. Regulates Wnt signaling through the removal of DVL3 aggregates, likely in an autophagy-dependent manner. This process may be important for the determination of brain size during embryonic development. May regulate osteoclastogenesis by acting on the TNFSF11/RANKL - TRAF6 pathway. After cytokinetic abscission, involved in midbody remnant degradation. In vitro strongly binds to phosphatidylinositol 3-phosphate (PtdIns3P). The chain is WD repeat and FYVE domain-containing protein 3 (Wdfy3) from Mus musculus (Mouse).